The sequence spans 165 residues: Cyclic pyranopterin monophosphate synthase (165 aa).

Substrate-binding positions include 76-78 and 113-114; these read MCH and IE. Residue Asp-128 is part of the active site.

This sequence belongs to the MoaC family. In terms of assembly, homohexamer; trimer of dimers.

It carries out the reaction (8S)-3',8-cyclo-7,8-dihydroguanosine 5'-triphosphate = cyclic pyranopterin phosphate + diphosphate. Its pathway is cofactor biosynthesis; molybdopterin biosynthesis. Catalyzes the conversion of (8S)-3',8-cyclo-7,8-dihydroguanosine 5'-triphosphate to cyclic pyranopterin monophosphate (cPMP). The protein is Cyclic pyranopterin monophosphate synthase of Limosilactobacillus fermentum (strain NBRC 3956 / LMG 18251) (Lactobacillus fermentum).